A 666-amino-acid chain; its full sequence is MTPPPPGRAAPSAPRARVPGPPARLGLPLRLRLLLLLWAAAASAQGHLRSGPRIFAVWKGHVGQDRVDFGQTEPHTVLFHEPGSSSVWVGGRGKVYLFDFPEGKNASVRTVNIGSTKGSCLDKRDCENYITLLERRSEGLLACGTNARHPSCWNLVNGTVVPLGEMRGYAPFSPDENSLVLFEGDEVYSTIRKQEYNGKIPRFRRIRGESELYTSDTVMQNPQFIKATIVHQDQAYDDKIYYFFREDNPDKNPEAPLNVSRVAQLCRGDQGGESSLSVSKWNTFLKAMLVCSDAATNKNFNRLQDVFLLPDPSGQWRDTRVYGVFSNPWNYSAVCVYSLGDIDKVFRTSSLKGYHSSLPNPRPGKCLPDQQPIPTETFQVADRHPEVAQRVEPMGPLKTPLFHSKYHYQKVAVHRMQASHGETFHVLYLTTDRGTIHKVVEPGEQEHSFAFNIMEIQPFRRAAAIQTMSLDAERRKLYVSSQWEVSQVPLDLCEVYGGGCHGCLMSRDPYCGWDQGRCISIYSSERSVLQSINPAEPHKECPNPKPDKAPLQKVSLAPNSRYYLSCPMESRHATYSWRHKENVEQSCEPGHQSPNCILFIENLTAQQYGHYFCEAQEGSYFREAQHWQLLPEDGIMAEHLLGHACALAASLWLGVLPTLTLGLLVH.

Residues 1-21 form a disordered region; sequence MTPPPPGRAAPSAPRARVPGP. The first 44 residues, 1-44, serve as a signal peptide directing secretion; that stretch reads MTPPPPGRAAPSAPRARVPGPPARLGLPLRLRLLLLLWAAAASA. Low complexity predominate over residues 9 to 21; the sequence is AAPSAPRARVPGP. The Sema domain maps to 53-490; it reads RIFAVWKGHV…SQWEVSQVPL (438 aa). An N-linked (GlcNAc...) asparagine glycan is attached at Asn105. Cys120 and Cys126 are oxidised to a cystine. Arg135 is modified (asymmetric dimethylarginine). Cys143 and Cys152 are oxidised to a cystine. Residues Asn157 and Asn258 are each glycosylated (N-linked (GlcNAc...) asparagine). Intrachain disulfides connect Cys266/Cys366, Cys291/Cys335, Cys493/Cys511, Cys500/Cys541, Cys503/Cys518, Cys566/Cys613, and Cys587/Cys596. The interaction with integrins stretch occupies residues 267–269; it reads RGD. The short motif at 267–269 is the Cell attachment site element; the sequence is RGD. Asn330 is a glycosylation site (N-linked (GlcNAc...) asparagine). In terms of domain architecture, Ig-like C2-type spans 544–629; the sequence is PKPDKAPLQK…YFREAQHWQL (86 aa). Residue Asn602 is glycosylated (N-linked (GlcNAc...) asparagine). The GPI-anchor amidated alanine moiety is linked to residue Ala648. The propeptide at 649-666 is removed in mature form; it reads ASLWLGVLPTLTLGLLVH.

The protein belongs to the semaphorin family. As to quaternary structure, interacts with ITGA1 and ITGB1. Interacts with PLXNC1. In terms of tissue distribution, detected in skin keratinocytes and on endothelial cells from skin blood vessels (at protein level). Expressed in fibroblasts, keratinocytes, melanocytes, placenta, testis, ovary, spleen, brain, spinal cord, lung, heart, adrenal gland, lymph nodes, thymus, intestine and kidney.

The protein localises to the cell membrane. Functionally, plays an important role in integrin-mediated signaling and functions both in regulating cell migration and immune responses. Promotes formation of focal adhesion complexes, activation of the protein kinase PTK2/FAK1 and subsequent phosphorylation of MAPK1 and MAPK3. Promotes production of pro-inflammatory cytokines by monocytes and macrophages. Plays an important role in modulating inflammation and T-cell-mediated immune responses. Promotes axon growth in the embryonic olfactory bulb. Promotes attachment, spreading and dendrite outgrowth in melanocytes. The protein is Semaphorin-7A (SEMA7A) of Homo sapiens (Human).